A 623-amino-acid chain; its full sequence is Leucine aminopeptidase 2 (623 aa).

The interval 1 to 23 (MRRCTKNSRSTNPPRDPNTLSNY) is disordered. Residues 7 to 23 (NSRSTNPPRDPNTLSNY) are compositionally biased toward polar residues. Residues 145-147 (QCQ) and 277-282 (PYGGME) contribute to the a peptide site. His-306 is a binding site for Zn(2+). The active-site Proton acceptor is Glu-307. Residues His-310 and Glu-329 each coordinate Zn(2+). Tyr-394 serves as the catalytic Proton donor.

This sequence belongs to the peptidase M1 family. Zn(2+) serves as cofactor.

The protein localises to the cytoplasm. It localises to the nucleus. The enzyme catalyses an epoxide + H2O = an ethanediol. Its function is as follows. Aminopeptidase that preferentially cleaves di- and tripeptides. Also has low epoxide hydrolase activity (in vitro). Can hydrolyze the epoxide leukotriene LTA(4) but it forms preferentially 5,6-dihydroxy-7,9,11,14-eicosatetraenoic acid rather than the cytokine leukotriene B(4) as the product compared to the homologous mammalian enzyme (in vitro). The protein is Leucine aminopeptidase 2 of Ajellomyces capsulatus (strain NAm1 / WU24) (Darling's disease fungus).